The following is a 117-amino-acid chain: UPF0145 protein PH1682 (117 aa).

The protein belongs to the UPF0145 family.

The sequence is that of UPF0145 protein PH1682 from Pyrococcus horikoshii (strain ATCC 700860 / DSM 12428 / JCM 9974 / NBRC 100139 / OT-3).